The primary structure comprises 319 residues: tRNA-cytidine(32) 2-sulfurtransferase (319 aa).

Residues 43-48 (SGGKDS) carry the PP-loop motif motif. 3 residues coordinate [4Fe-4S] cluster: cysteine 118, cysteine 121, and cysteine 209.

It belongs to the TtcA family. Homodimer. It depends on Mg(2+) as a cofactor. The cofactor is [4Fe-4S] cluster.

It is found in the cytoplasm. It carries out the reaction cytidine(32) in tRNA + S-sulfanyl-L-cysteinyl-[cysteine desulfurase] + AH2 + ATP = 2-thiocytidine(32) in tRNA + L-cysteinyl-[cysteine desulfurase] + A + AMP + diphosphate + H(+). The protein operates within tRNA modification. Functionally, catalyzes the ATP-dependent 2-thiolation of cytidine in position 32 of tRNA, to form 2-thiocytidine (s(2)C32). The sulfur atoms are provided by the cysteine/cysteine desulfurase (IscS) system. This chain is tRNA-cytidine(32) 2-sulfurtransferase, found in Neisseria meningitidis serogroup A / serotype 4A (strain DSM 15465 / Z2491).